Reading from the N-terminus, the 93-residue chain is MARSIKKGPFVDGHLEAKAQAEQAGSKKVIKTWSRRSTIIPEFIGLTFAVHNGKKFIPVFVTENMVGHKMGEFSPTRTFYGHAADKKSKLKKK.

The protein belongs to the universal ribosomal protein uS19 family.

Its function is as follows. Protein S19 forms a complex with S13 that binds strongly to the 16S ribosomal RNA. This chain is Small ribosomal subunit protein uS19, found in Citrifermentans bemidjiense (strain ATCC BAA-1014 / DSM 16622 / JCM 12645 / Bem) (Geobacter bemidjiensis).